The chain runs to 446 residues: tRNA modification GTPase MnmE (446 aa).

Positions 22, 80, and 119 each coordinate (6S)-5-formyl-5,6,7,8-tetrahydrofolate. The region spanning 215-370 (GLSLVIAGRP…LKKVIKQVVG (156 aa)) is the TrmE-type G domain. K(+) is bound at residue Asn225. GTP contacts are provided by residues 225 to 230 (NAGKST), 244 to 250 (TEIAGTT), and 269 to 272 (DTAG). Ser229 contacts Mg(2+). Residues Thr244, Ile246, and Thr249 each contribute to the K(+) site. A Mg(2+)-binding site is contributed by Thr250. Lys446 contributes to the (6S)-5-formyl-5,6,7,8-tetrahydrofolate binding site.

It belongs to the TRAFAC class TrmE-Era-EngA-EngB-Septin-like GTPase superfamily. TrmE GTPase family. As to quaternary structure, homodimer. Heterotetramer of two MnmE and two MnmG subunits. K(+) serves as cofactor.

The protein localises to the cytoplasm. Its function is as follows. Exhibits a very high intrinsic GTPase hydrolysis rate. Involved in the addition of a carboxymethylaminomethyl (cmnm) group at the wobble position (U34) of certain tRNAs, forming tRNA-cmnm(5)s(2)U34. In Legionella pneumophila subsp. pneumophila (strain Philadelphia 1 / ATCC 33152 / DSM 7513), this protein is tRNA modification GTPase MnmE.